The primary structure comprises 236 residues: Sugar fermentation stimulation protein homolog (236 aa).

The protein belongs to the SfsA family.

The protein is Sugar fermentation stimulation protein homolog of Proteus mirabilis (strain HI4320).